Here is a 398-residue protein sequence, read N- to C-terminus: 1-deoxy-D-xylulose 5-phosphate reductoisomerase (398 aa).

NADPH is bound by residues threonine 11, glycine 12, serine 13, isoleucine 14, arginine 38, asparagine 39, and asparagine 125. Position 126 (lysine 126) interacts with 1-deoxy-D-xylulose 5-phosphate. Glutamate 127 contributes to the NADPH binding site. Position 151 (aspartate 151) interacts with Mn(2+). 1-deoxy-D-xylulose 5-phosphate-binding residues include serine 152, glutamate 153, serine 179, and histidine 202. Glutamate 153 lines the Mn(2+) pocket. Glycine 208 is a binding site for NADPH. Positions 215, 220, 221, and 224 each coordinate 1-deoxy-D-xylulose 5-phosphate. Glutamate 224 is a binding site for Mn(2+).

This sequence belongs to the DXR family. Mg(2+) is required as a cofactor. Mn(2+) serves as cofactor.

The enzyme catalyses 2-C-methyl-D-erythritol 4-phosphate + NADP(+) = 1-deoxy-D-xylulose 5-phosphate + NADPH + H(+). It participates in isoprenoid biosynthesis; isopentenyl diphosphate biosynthesis via DXP pathway; isopentenyl diphosphate from 1-deoxy-D-xylulose 5-phosphate: step 1/6. In terms of biological role, catalyzes the NADPH-dependent rearrangement and reduction of 1-deoxy-D-xylulose-5-phosphate (DXP) to 2-C-methyl-D-erythritol 4-phosphate (MEP). The protein is 1-deoxy-D-xylulose 5-phosphate reductoisomerase of Burkholderia multivorans (strain ATCC 17616 / 249).